We begin with the raw amino-acid sequence, 129 residues long: NADH-quinone oxidoreductase subunit A (129 aa).

3 consecutive transmembrane segments (helical) span residues 9–29 (FPIGVVLLVAVVLAFTMLGLA), 68–88 (LLFIVFDIEAIFLYPWAVLLL), and 97–117 (LGWPGFVSMGIFVFTLVAGLV).

This sequence belongs to the complex I subunit 3 family. NDH-1 is composed of 14 different subunits. Subunits NuoA, H, J, K, L, M, N constitute the membrane sector of the complex.

Its subcellular location is the cell inner membrane. The enzyme catalyses a quinone + NADH + 5 H(+)(in) = a quinol + NAD(+) + 4 H(+)(out). In terms of biological role, NDH-1 shuttles electrons from NADH, via FMN and iron-sulfur (Fe-S) centers, to quinones in the respiratory chain. The immediate electron acceptor for the enzyme in this species is believed to be ubiquinone. Couples the redox reaction to proton translocation (for every two electrons transferred, four hydrogen ions are translocated across the cytoplasmic membrane), and thus conserves the redox energy in a proton gradient. The chain is NADH-quinone oxidoreductase subunit A from Anaeromyxobacter sp. (strain K).